We begin with the raw amino-acid sequence, 1117 residues long: Protein cup (1117 aa).

The interval 1-106 is disordered; sequence MQMAEAEQEN…PPPPPPLPTS (106 aa). Pro residues-rich tracts occupy residues 54 to 64 and 95 to 104; these read YPPPPPPPTPV and CAPPPPPPLP. Phosphoserine occurs at positions 263 and 270. The segment at 270-326 is disordered; sequence SPRKQVASKEAVPEQQSSQVQQKRPPSTGIHKPGSLRAPKAVRPTTAPVVSSKPVKS. Residues 283–294 are compositionally biased toward polar residues; it reads EQQSSQVQQKRP. The YXXXXLphi motif 1 signature appears at 327–333; the sequence is YTRSRLM. 2 positions are modified to phosphoserine: Ser347 and Ser350. The short motif at 363–369 is the YXXXXLphi motif 2 element; the sequence is ELEGRLR. Disordered regions lie at residues 493-528, 596-618, 654-673, 679-728, 984-1004, and 1016-1051; these read ISSQ…EDLS, KEGN…KMDH, TEHQ…SFQF, SQQN…SSSS, GAKH…QARP, and ISGG…FQSF. A Phosphothreonine modification is found at Thr503. Ser509, Ser513, Ser520, Ser523, and Ser524 each carry phosphoserine. Low complexity-rich tracts occupy residues 679–712 and 988–1001; these read SQQN…NTNN and QAQQ…QQRQ.

It belongs to the 4E-T/EIF4E-T family. Component of the osk RNP complex, which is composed of at least exu, yps, aret/bruno, cup, and the mRNA of osk. Interacts with the decapping activators me31B and tral. Component of the nanos RNP complex, which is composed of at least smg, cup, tral, me31B, the CCR4-NOT complex members Rga/NOT2 and Caf1, and the mRNA of nanos (nos). Interacts with btz. Recruited to the 3'-UTR of nos and osk mRNAs by smg and btz, respectively. Forms a ribonucleoprotein complex (RNP) containing at least me31B, eIF4E1, cup, tral and pAbp; this interaction is required for the translational silencing of maternal mRNAs during the maternal-to-zygotic transition. No interaction was detected with pAbp in 1-5 hour embryos. Interacts with osk and vas. Interacts with Pop2, twin/CCR4, Rga, Not3 and Not1 which are all core components of the CCR4-NOT deadenylase complex; interaction with the complex is required for cup deadenylation activity. Interacts with nanos. Interacts with smg. Interacts (via YXXXXLphi motifs) with eIF4E1; the interaction promotes retention of cup in the cytoplasm. Interacts with orb; the interaction represses the orb positive autoregulatory loop. Interacts with Nup154. As to expression, predominantly expressed in ovaries and in 0-2 hours old embryos. Weakly expressed in testis. Expressed in young embryos through stage 9, then it decreases throughout the rest of embryogenesis. In ovaries, it is expressed in germ cells throughout pre-vitellogenic development, but is not expressed in the somatic follicle cells. In germarial cysts, the protein (and not the transcripts) is transported selectively into the oocyte.

It localises to the cytoplasm. The protein resides in the nucleus. The protein localises to the cytoplasmic ribonucleoprotein granule. In terms of biological role, adapter protein that plays a central role in localization of transcripts in the oocyte and in young embryos. Maintains RNA targets in a repressed state by promoting their deadenylation and protects deadenylated mRNAs from further degradation. Binds to and recruits eIF-4E to the 3'-UTR of some mRNA targets which prevents interaction between eIF4E1 and eIF4G. This may contribute to translational repression but does not appear to be necessary for it to occur. Can promote translational repression independently of deadenylation and eIF4E1 binding. Required for correct localization of eIF4E1 in the developing oocyte. Required for translational repression of oskar (osk) mRNA. Also required for the translational repression of nanos (nos) mRNA. Promotes the accumulation of the germ plasm components osk, vas and stau at the posterior pole of the oocyte and is required for germ cell development. Represses orb positive autoregulatory activity which prevents premature activation of orb and ensures its accumulation specifically in the developing oocyte. In 0-1 hour embryos, forms a complex with me31B, cup, tral and pAbp which binds to various mRNAs including maternal mRNAs, and down-regulates their expression during the maternal-to-zygotic transition. This chain is Protein cup (cup), found in Drosophila melanogaster (Fruit fly).